A 143-amino-acid chain; its full sequence is Transcriptional regulator MraZ (143 aa).

SpoVT-AbrB domains follow at residues 5–47 (THTP…PMQE) and 76–119 (ASSE…DLRT).

This sequence belongs to the MraZ family. In terms of assembly, forms oligomers.

It localises to the cytoplasm. The protein resides in the nucleoid. This chain is Transcriptional regulator MraZ, found in Kineococcus radiotolerans (strain ATCC BAA-149 / DSM 14245 / SRS30216).